Consider the following 733-residue polypeptide: Hexamerin (733 aa).

An N-terminal signal peptide occupies residues 1-17 (MKTALVLILATATLAVA). N-linked (GlcNAc...) asparagine glycosylation is found at Asn-199, Asn-234, and Asn-431.

This sequence belongs to the hemocyanin family. As to quaternary structure, homohexamer.

The protein localises to the secreted. It is found in the extracellular space. Its function is as follows. Larval storage protein (LSP) which may serve as a store of amino acids for synthesis of adult proteins. The protein is Hexamerin of Blaberus discoidalis (Tropical cockroach).